Reading from the N-terminus, the 491-residue chain is MEIRGSSQTAAAWAGEAIALGFFESETVLTVPENLTALDERLSGVIAEVIAETEFKGKSGKLSVTRLGSGAPIKKLLLVGLGNAEKWNSAVLRSTAAAIARAVKGDKAITTLGLQLPVAETEAITAQMVTEGMYLGFYEDNRFKSEQKDPPALEAVEILGIGDQPAAIALGTSLCEGVIYARELVNAPANIINPVTLAASVESLASTYGLELNILEEADCEAAGMGSFLGVAAASDLPPKFIHLVYKPLGTPRKKVAIVGKGLTFDSGGYNIKPSGPSIAMMKMDMGGAAATFGAAKAIAELKPDVEVHFISAATENMISGRGMRPGDILTASNGKTIEVNNTDAEGRLTLADALVYAEKLGVEAIVDIATLTGACVIALGDDICGLWSDNDDLAQAIATASEKAGEKFWQMPLEEKYFEGLKSPIADMKNTGPREGGSITAALFLKEFVENTPWAHLDIAGPAWSEKDADIYSKGGTGFPVRTLVHWVLS.

Mn(2+) contacts are provided by K261 and D266. K273 is a catalytic residue. Mn(2+)-binding residues include D285, D344, and E346. The active site involves R348.

This sequence belongs to the peptidase M17 family. Mn(2+) serves as cofactor.

It localises to the cytoplasm. The enzyme catalyses Release of an N-terminal amino acid, Xaa-|-Yaa-, in which Xaa is preferably Leu, but may be other amino acids including Pro although not Arg or Lys, and Yaa may be Pro. Amino acid amides and methyl esters are also readily hydrolyzed, but rates on arylamides are exceedingly low.. It carries out the reaction Release of an N-terminal amino acid, preferentially leucine, but not glutamic or aspartic acids.. Its function is as follows. Presumably involved in the processing and regular turnover of intracellular proteins. Catalyzes the removal of unsubstituted N-terminal amino acids from various peptides. The protein is Probable cytosol aminopeptidase of Picosynechococcus sp. (strain ATCC 27264 / PCC 7002 / PR-6) (Agmenellum quadruplicatum).